The sequence spans 668 residues: DNA ligase (668 aa).

Residues 37–41, 86–87, and E116 contribute to the NAD(+) site; these read DAVYD and SM. K118 (N6-AMP-lysine intermediate) is an active-site residue. Residues R139, E173, K288, and K312 each coordinate NAD(+). Zn(2+) contacts are provided by C406, C409, C424, and C429. Residues 590–668 form the BRCT domain; it reads APDNFFKEKT…EQEAIAKIEK (79 aa).

This sequence belongs to the NAD-dependent DNA ligase family. LigA subfamily. It depends on Mg(2+) as a cofactor. Requires Mn(2+) as cofactor.

The enzyme catalyses NAD(+) + (deoxyribonucleotide)n-3'-hydroxyl + 5'-phospho-(deoxyribonucleotide)m = (deoxyribonucleotide)n+m + AMP + beta-nicotinamide D-nucleotide.. Its function is as follows. DNA ligase that catalyzes the formation of phosphodiester linkages between 5'-phosphoryl and 3'-hydroxyl groups in double-stranded DNA using NAD as a coenzyme and as the energy source for the reaction. It is essential for DNA replication and repair of damaged DNA. This is DNA ligase from Lactobacillus gasseri (strain ATCC 33323 / DSM 20243 / BCRC 14619 / CIP 102991 / JCM 1131 / KCTC 3163 / NCIMB 11718 / NCTC 13722 / AM63).